The chain runs to 482 residues: MIFLIFSILFLHLANCDYTPDWESLDNRPLPSWYDDSKFGIFCHWGLYSVPAFRSEWMWWYWKGTQPDKDVVNFVDKNYKPGTTYADFAKDFTAEYFNANQFAETVKTSGARYFVFTSKHHEGFTMWPSRTSWNWNSMDIGPKRDIVGELRDAFKKTDVHFGLYFSQFEWFHPMFLDDGKFNTTFYPEQVSYPQMIDIVTKYNPEVVWSDGEWDKSDDYWKAKEFLAWLYNSSPVKDQVVVNDRWGTGTMGKHGGFMTYSDHYDPGKLLEKKWENCMTLDKHSWGNRRDMKASEVNTAYEIIEQLARTIACNGNLLLNVGPNMHGQIPAIFEDRLEEIGRFVNITSEAIFGTRPWIHQNDTSASNVWYTSKYSSGKKPLKNLYQNVYNFQLEEHTIVYAWILDTSHEQFELKSVKTTKNTTATILGTDVVLTGFEESDSMIILSSKIDWKKLPRRDIIVLKIEKAASYLRNPLMSTNEHHVQ.

The N-terminal stretch at 1 to 16 (MIFLIFSILFLHLANC) is a signal peptide. N-linked (GlcNAc...) asparagine glycosylation is found at Asn-182, Asn-343, Asn-359, and Asn-419.

This sequence belongs to the glycosyl hydrolase 29 family.

The catalysed reaction is an alpha-L-fucoside + H2O = L-fucose + an alcohol. In terms of biological role, alpha-L-fucosidase is responsible for hydrolyzing the alpha-1,6-linked fucose joined to the reducing-end N-acetylglucosamine of the carbohydrate moieties of glycoproteins. This chain is Putative alpha-L-fucosidase, found in Caenorhabditis elegans.